A 156-amino-acid chain; its full sequence is SsrA-binding protein (156 aa).

A disordered region spans residues 130–156 (KFDKRDDLKKKDAKRDIDRALRDKQKY). Residues 132–156 (DKRDDLKKKDAKRDIDRALRDKQKY) are compositionally biased toward basic and acidic residues.

It belongs to the SmpB family.

The protein resides in the cytoplasm. Required for rescue of stalled ribosomes mediated by trans-translation. Binds to transfer-messenger RNA (tmRNA), required for stable association of tmRNA with ribosomes. tmRNA and SmpB together mimic tRNA shape, replacing the anticodon stem-loop with SmpB. tmRNA is encoded by the ssrA gene; the 2 termini fold to resemble tRNA(Ala) and it encodes a 'tag peptide', a short internal open reading frame. During trans-translation Ala-aminoacylated tmRNA acts like a tRNA, entering the A-site of stalled ribosomes, displacing the stalled mRNA. The ribosome then switches to translate the ORF on the tmRNA; the nascent peptide is terminated with the 'tag peptide' encoded by the tmRNA and targeted for degradation. The ribosome is freed to recommence translation, which seems to be the essential function of trans-translation. This chain is SsrA-binding protein, found in Exiguobacterium sibiricum (strain DSM 17290 / CCUG 55495 / CIP 109462 / JCM 13490 / 255-15).